Consider the following 217-residue polypeptide: Imidazole glycerol phosphate synthase subunit HisH (217 aa).

In terms of domain architecture, Glutamine amidotransferase type-1 spans 5–217; sequence RVGIINYGVG…LRLLANFLTL (213 aa). C93 serves as the catalytic Nucleophile. Active-site residues include H199 and E201.

In terms of assembly, heterodimer of HisH and HisF.

It is found in the cytoplasm. It carries out the reaction 5-[(5-phospho-1-deoxy-D-ribulos-1-ylimino)methylamino]-1-(5-phospho-beta-D-ribosyl)imidazole-4-carboxamide + L-glutamine = D-erythro-1-(imidazol-4-yl)glycerol 3-phosphate + 5-amino-1-(5-phospho-beta-D-ribosyl)imidazole-4-carboxamide + L-glutamate + H(+). It catalyses the reaction L-glutamine + H2O = L-glutamate + NH4(+). Its pathway is amino-acid biosynthesis; L-histidine biosynthesis; L-histidine from 5-phospho-alpha-D-ribose 1-diphosphate: step 5/9. Functionally, IGPS catalyzes the conversion of PRFAR and glutamine to IGP, AICAR and glutamate. The HisH subunit catalyzes the hydrolysis of glutamine to glutamate and ammonia as part of the synthesis of IGP and AICAR. The resulting ammonia molecule is channeled to the active site of HisF. The polypeptide is Imidazole glycerol phosphate synthase subunit HisH (Helicobacter hepaticus (strain ATCC 51449 / 3B1)).